The primary structure comprises 133 residues: Interleukin-4 (133 aa).

Positions 1 to 24 (MGLTSQLIPMLVCLLACTSNFVHG) are cleaved as a signal peptide. 3 cysteine pairs are disulfide-bonded: C27–C133, C48–C85, and C70–C105. Residues N62, N96, and N102 are each glycosylated (N-linked (GlcNAc...) asparagine).

It belongs to the IL-4/IL-13 family.

The protein resides in the secreted. Functionally, participates in at least several B-cell activation processes as well as of other cell types. It is a costimulator of DNA-synthesis. It induces the expression of class II MHC molecules on resting B-cells. It enhances both secretion and cell surface expression of IgE and IgG1. It also regulates the expression of the low affinity Fc receptor for IgE (CD23) on both lymphocytes and monocytes. Positively regulates IL31RA expression in macrophages. Stimulates autophagy in dendritic cells by interfering with mTORC1 signaling and through the induction of RUFY4. This is Interleukin-4 (IL4) from Tursiops truncatus (Atlantic bottle-nosed dolphin).